Here is a 309-residue protein sequence, read N- to C-terminus: Lipoyl synthase (309 aa).

[4Fe-4S] cluster is bound by residues Cys-37, Cys-42, Cys-48, Cys-67, Cys-71, Cys-74, and Ser-281. The Radical SAM core domain maps to 53 to 270 (DGPGTATFML…RVAETEFGFL (218 aa)).

It belongs to the radical SAM superfamily. Lipoyl synthase family. [4Fe-4S] cluster is required as a cofactor.

It is found in the cytoplasm. It carries out the reaction [[Fe-S] cluster scaffold protein carrying a second [4Fe-4S](2+) cluster] + N(6)-octanoyl-L-lysyl-[protein] + 2 oxidized [2Fe-2S]-[ferredoxin] + 2 S-adenosyl-L-methionine + 4 H(+) = [[Fe-S] cluster scaffold protein] + N(6)-[(R)-dihydrolipoyl]-L-lysyl-[protein] + 4 Fe(3+) + 2 hydrogen sulfide + 2 5'-deoxyadenosine + 2 L-methionine + 2 reduced [2Fe-2S]-[ferredoxin]. Its pathway is protein modification; protein lipoylation via endogenous pathway; protein N(6)-(lipoyl)lysine from octanoyl-[acyl-carrier-protein]: step 2/2. Its function is as follows. Catalyzes the radical-mediated insertion of two sulfur atoms into the C-6 and C-8 positions of the octanoyl moiety bound to the lipoyl domains of lipoate-dependent enzymes, thereby converting the octanoylated domains into lipoylated derivatives. This Natronomonas pharaonis (strain ATCC 35678 / DSM 2160 / CIP 103997 / JCM 8858 / NBRC 14720 / NCIMB 2260 / Gabara) (Halobacterium pharaonis) protein is Lipoyl synthase.